A 158-amino-acid polypeptide reads, in one-letter code: Probable flavodoxin 1 (158 aa).

The Flavodoxin-like domain occupies 4–144 (ALITYASMSG…SCRAFARGFL (141 aa)).

It belongs to the flavodoxin family. FMN is required as a cofactor.

Functionally, low-potential electron donor to a number of redox enzymes. This Bacillus subtilis (strain 168) protein is Probable flavodoxin 1 (ykuN).